The chain runs to 469 residues: MAGKGYIVRIIGPVVDVKFDEKELPDIYNALEVTNPQNGEKLILEVEQLIGDNTVRAVALDSTDGLTRGLEVVDTGKPIVAPVGKGVLGRILNVVGKPIDEKGDIQAEDYWPIHRPAPKITEQKTEIEVLETGIKVIDLLAPFPKGGKIGFFGGAGVGKTVLVMELIRNIAIEQKGFSVFAGVGERTREGNDLWLEMQEAGVLENTVLVFGQMNEPPGARFRVGLTALTIAEYFRDVEGRDVLLFIDNIFRFVQAGSEVSALLGRMPSAVGYQPTLATDMGELQERITSTQKGSITSVQAIYVPADDITDPAPATTFSHLDASVVLSRKIAELGIYPAVDPLDSTSKILDPAVIGWEHYQVARGVQEVLQRYKDLQDIIAILGMEELTEEDKLIVQRARKIQRFLSQPFFVAERFTGANGKYVPISETVKGFKEILEGKHDSLPEQAFFMVGTIDEAVQKAERLKGSAA.

An ATP-binding site is contributed by 153 to 160; sequence GGAGVGKT.

The protein belongs to the ATPase alpha/beta chains family. As to quaternary structure, F-type ATPases have 2 components, CF(1) - the catalytic core - and CF(0) - the membrane proton channel. CF(1) has five subunits: alpha(3), beta(3), gamma(1), delta(1), epsilon(1). CF(0) has three main subunits: a(1), b(2) and c(9-12). The alpha and beta chains form an alternating ring which encloses part of the gamma chain. CF(1) is attached to CF(0) by a central stalk formed by the gamma and epsilon chains, while a peripheral stalk is formed by the delta and b chains.

It localises to the cell inner membrane. It carries out the reaction ATP + H2O + 4 H(+)(in) = ADP + phosphate + 5 H(+)(out). Functionally, produces ATP from ADP in the presence of a proton gradient across the membrane. The catalytic sites are hosted primarily by the beta subunits. The chain is ATP synthase subunit beta from Pseudothermotoga lettingae (strain ATCC BAA-301 / DSM 14385 / NBRC 107922 / TMO) (Thermotoga lettingae).